Here is a 227-residue protein sequence, read N- to C-terminus: 7-cyano-7-deazaguanine synthase (227 aa).

Residue 7-17 (VSGGMDSLVAT) participates in ATP binding. Cys187, Cys195, Cys198, and Cys201 together coordinate Zn(2+).

It belongs to the QueC family. Zn(2+) serves as cofactor.

The enzyme catalyses 7-carboxy-7-deazaguanine + NH4(+) + ATP = 7-cyano-7-deazaguanine + ADP + phosphate + H2O + H(+). Its pathway is purine metabolism; 7-cyano-7-deazaguanine biosynthesis. Its function is as follows. Catalyzes the ATP-dependent conversion of 7-carboxy-7-deazaguanine (CDG) to 7-cyano-7-deazaguanine (preQ(0)). This is 7-cyano-7-deazaguanine synthase from Chlorobaculum tepidum (strain ATCC 49652 / DSM 12025 / NBRC 103806 / TLS) (Chlorobium tepidum).